We begin with the raw amino-acid sequence, 1008 residues long: Kinesin-like protein KIN-5C (1008 aa).

Residues 12–359 (NVQVLLRCRP…LDYAHRAKSI (348 aa)) enclose the Kinesin motor domain. 98 to 105 (GQTGTGKT) is an ATP binding site. Residues 402–459 (KDRYQQEENERKAMADQIEQMTTSLEANQKQINDLQEKYDSELQHSADLSKKLEATEK) are a coiled coil. Disordered stretches follow at residues 910 to 931 (VEAH…TAGI), 943 to 962 (YKDY…EVPS), and 975 to 1008 (ESLM…TINN). Basic and acidic residues predominate over residues 913-925 (HLGESQHLQESHS). Basic and acidic residues predominate over residues 979 to 995 (DEFRENHPYEPSKDRRP).

This sequence belongs to the TRAFAC class myosin-kinesin ATPase superfamily. Kinesin family. KIN-5/BimC subfamily.

It is found in the cytoplasm. It localises to the cytoskeleton. The protein localises to the spindle. Responsible for microtubule translocation. May be important for the organization of phragmoplast-specific arrays of microtubules. Plays an essential role in stabilizing the mitotic spindle. Required during mitotic cytokinesis. In Oryza sativa subsp. japonica (Rice), this protein is Kinesin-like protein KIN-5C.